Consider the following 98-residue polypeptide: NADH-ubiquinone oxidoreductase chain 4L (98 aa).

Transmembrane regions (helical) follow at residues 1-21, 29-49, and 61-81; these read MIPTYMNIMLAFTISLLGMLI, SLLCLEGMMMSLFIMTTLIAL, and IILLVFAACEAAVGLALLVSI.

It belongs to the complex I subunit 4L family. As to quaternary structure, core subunit of respiratory chain NADH dehydrogenase (Complex I) which is composed of 45 different subunits.

It localises to the mitochondrion inner membrane. It carries out the reaction a ubiquinone + NADH + 5 H(+)(in) = a ubiquinol + NAD(+) + 4 H(+)(out). In terms of biological role, core subunit of the mitochondrial membrane respiratory chain NADH dehydrogenase (Complex I) which catalyzes electron transfer from NADH through the respiratory chain, using ubiquinone as an electron acceptor. Part of the enzyme membrane arm which is embedded in the lipid bilayer and involved in proton translocation. In Macaca ochreata (Booted macaque), this protein is NADH-ubiquinone oxidoreductase chain 4L (MT-ND4L).